Here is a 71-residue protein sequence, read N- to C-terminus: Cytochrome c oxidase subunit 8C, mitochondrial (71 aa).

The transit peptide at Met1–Ala28 directs the protein to the mitochondrion. The Mitochondrial matrix segment spans residues His29–Ser39. Residues Ala40–Ser63 form a helical membrane-spanning segment. Over Asn64–Glu71 the chain is Mitochondrial intermembrane.

Belongs to the cytochrome c oxidase VIII family. In terms of assembly, component of the cytochrome c oxidase (complex IV, CIV), a multisubunit enzyme composed of 14 subunits. The complex is composed of a catalytic core of 3 subunits MT-CO1, MT-CO2 and MT-CO3, encoded in the mitochondrial DNA, and 11 supernumerary subunits COX4I, COX5A, COX5B, COX6A, COX6B, COX6C, COX7A, COX7B, COX7C, COX8 and NDUFA4, which are encoded in the nuclear genome. The complex exists as a monomer or a dimer and forms supercomplexes (SCs) in the inner mitochondrial membrane with NADH-ubiquinone oxidoreductase (complex I, CI) and ubiquinol-cytochrome c oxidoreductase (cytochrome b-c1 complex, complex III, CIII), resulting in different assemblies (supercomplex SCI(1)III(2)IV(1) and megacomplex MCI(2)III(2)IV(2)).

It localises to the mitochondrion inner membrane. It participates in energy metabolism; oxidative phosphorylation. Component of the cytochrome c oxidase, the last enzyme in the mitochondrial electron transport chain which drives oxidative phosphorylation. The respiratory chain contains 3 multisubunit complexes succinate dehydrogenase (complex II, CII), ubiquinol-cytochrome c oxidoreductase (cytochrome b-c1 complex, complex III, CIII) and cytochrome c oxidase (complex IV, CIV), that cooperate to transfer electrons derived from NADH and succinate to molecular oxygen, creating an electrochemical gradient over the inner membrane that drives transmembrane transport and the ATP synthase. Cytochrome c oxidase is the component of the respiratory chain that catalyzes the reduction of oxygen to water. Electrons originating from reduced cytochrome c in the intermembrane space (IMS) are transferred via the dinuclear copper A center (CU(A)) of subunit 2 and heme A of subunit 1 to the active site in subunit 1, a binuclear center (BNC) formed by heme A3 and copper B (CU(B)). The BNC reduces molecular oxygen to 2 water molecules using 4 electrons from cytochrome c in the IMS and 4 protons from the mitochondrial matrix. In Eulemur fulvus fulvus (Brown lemur), this protein is Cytochrome c oxidase subunit 8C, mitochondrial (COX8C).